The chain runs to 715 residues: ATP-dependent DNA helicase Hel308 (715 aa).

ATP contacts are provided by residues glutamine 35 and 53–60; that span reads SPTGSGKT. Residues 40–203 enclose the Helicase ATP-binding domain; sequence KKGLLDGNRL…WLGAEPVATN (164 aa). The short motif at 152–155 is the DEAH box element; the sequence is DELH. The Helicase C-terminal domain occupies 236-442; that stretch reads HGDDAIIAYT…ERAFYTFLLG (207 aa).

Belongs to the helicase family. Hel308 subfamily. Monomer. Interacts with PINA ATPase which decreases both DNA helicase activities of this protein.

It catalyses the reaction Couples ATP hydrolysis with the unwinding of duplex DNA by translocating in the 3'-5' direction.. The enzyme catalyses ATP + H2O = ADP + phosphate + H(+). It carries out the reaction Couples ATP hydrolysis with the unwinding of duplex DNA at the replication fork by translocating in the 5'-3' direction. This creates two antiparallel DNA single strands (ssDNA). The leading ssDNA polymer is the template for DNA polymerase III holoenzyme which synthesizes a continuous strand.. Its activity is regulated as follows. PINA inhibits the (weak) 5'-3' but not the 3'-5' helicase activity of this protein on overhang substrates. Functionally, DNA-dependent ATPase and 3'-5' DNA helicase that may be involved in repair of stalled replication forks. Its function is as follows. Has predominantly 3'-5' helicase activity but also a weak 5'-3' helicase activity. Has the ability to unwind replication forks, preferentially removing the lagging strand. Hjc, Hjm (Hel308) and branch migration ATPase PINA coordinate HJ migration and cleavage of replication forks in a coordinated way. The chain is ATP-dependent DNA helicase Hel308 from Saccharolobus islandicus (strain REY15A) (Sulfolobus islandicus).